Consider the following 182-residue polypeptide: MTLIAGLGNPGPKYENTRHNIGFMLIDLLKDSNFKDVSSAKFQGEVFKFNGIILLKPTTFMNLSGQSVKAVRDFYKPDRIIVIHDDLDLSFGAVKFKKGGSSGGHNGIKSIDNLIGNDYERVRVGIGHEGDAKNFVLGEFSDEEKKALDEILAYTKNAVCELLKSDINEISQKFTVKKGLIK.

Residue Tyr-14 participates in tRNA binding. The active-site Proton acceptor is His-19. The tRNA site is built by Phe-60, Asn-62, and Asn-106.

This sequence belongs to the PTH family. Monomer.

The protein resides in the cytoplasm. The catalysed reaction is an N-acyl-L-alpha-aminoacyl-tRNA + H2O = an N-acyl-L-amino acid + a tRNA + H(+). Its function is as follows. Hydrolyzes ribosome-free peptidyl-tRNAs (with 1 or more amino acids incorporated), which drop off the ribosome during protein synthesis, or as a result of ribosome stalling. Catalyzes the release of premature peptidyl moieties from peptidyl-tRNA molecules trapped in stalled 50S ribosomal subunits, and thus maintains levels of free tRNAs and 50S ribosomes. The sequence is that of Peptidyl-tRNA hydrolase from Campylobacter concisus (strain 13826).